We begin with the raw amino-acid sequence, 586 residues long: Arginine--tRNA ligase (586 aa).

The 'HIGH' region signature appears at 128–138; the sequence is ANPTGPLHVGH.

The protein belongs to the class-I aminoacyl-tRNA synthetase family. As to quaternary structure, monomer.

It is found in the cytoplasm. The enzyme catalyses tRNA(Arg) + L-arginine + ATP = L-arginyl-tRNA(Arg) + AMP + diphosphate. The polypeptide is Arginine--tRNA ligase (Thioalkalivibrio sulfidiphilus (strain HL-EbGR7)).